A 363-amino-acid polypeptide reads, in one-letter code: 3-isopropylmalate dehydrogenase (363 aa).

Residue 78 to 91 (GKKWDDLPINQRPE) coordinates NAD(+). Positions 99, 109, 138, and 227 each coordinate substrate. Mg(2+) is bound by residues D227, D251, and D255. 285-297 (GSAPDIEGKNIAN) lines the NAD(+) pocket.

It belongs to the isocitrate and isopropylmalate dehydrogenases family. LeuB type 1 subfamily. In terms of assembly, homodimer. It depends on Mg(2+) as a cofactor. The cofactor is Mn(2+).

Its subcellular location is the cytoplasm. The catalysed reaction is (2R,3S)-3-isopropylmalate + NAD(+) = 4-methyl-2-oxopentanoate + CO2 + NADH. Its pathway is amino-acid biosynthesis; L-leucine biosynthesis; L-leucine from 3-methyl-2-oxobutanoate: step 3/4. In terms of biological role, catalyzes the oxidation of 3-carboxy-2-hydroxy-4-methylpentanoate (3-isopropylmalate) to 3-carboxy-4-methyl-2-oxopentanoate. The product decarboxylates to 4-methyl-2 oxopentanoate. This chain is 3-isopropylmalate dehydrogenase, found in Buchnera aphidicola subsp. Uroleucon rudbeckiae.